We begin with the raw amino-acid sequence, 428 residues long: 3-phosphoshikimate 1-carboxyvinyltransferase (428 aa).

The 3-phosphoshikimate site is built by Lys22, Ser23, and Arg27. Lys22 contacts phosphoenolpyruvate. Residues Gly96 and Arg124 each contribute to the phosphoenolpyruvate site. Residues Ser169, Ser170, Gln171, Ser197, Asp313, Asn336, and Lys340 each coordinate 3-phosphoshikimate. Gln171 is a binding site for phosphoenolpyruvate. Catalysis depends on Asp313, which acts as the Proton acceptor. Residues Arg344, Arg386, and Lys411 each contribute to the phosphoenolpyruvate site.

It belongs to the EPSP synthase family. Monomer.

The protein localises to the cytoplasm. It catalyses the reaction 3-phosphoshikimate + phosphoenolpyruvate = 5-O-(1-carboxyvinyl)-3-phosphoshikimate + phosphate. The protein operates within metabolic intermediate biosynthesis; chorismate biosynthesis; chorismate from D-erythrose 4-phosphate and phosphoenolpyruvate: step 6/7. Functionally, catalyzes the transfer of the enolpyruvyl moiety of phosphoenolpyruvate (PEP) to the 5-hydroxyl of shikimate-3-phosphate (S3P) to produce enolpyruvyl shikimate-3-phosphate and inorganic phosphate. In Photorhabdus laumondii subsp. laumondii (strain DSM 15139 / CIP 105565 / TT01) (Photorhabdus luminescens subsp. laumondii), this protein is 3-phosphoshikimate 1-carboxyvinyltransferase.